The following is a 274-amino-acid chain: Single-stranded DNA-binding protein WHY1, chloroplastic (274 aa).

A chloroplast-targeting transit peptide spans 1–54 (MSNFSLSPSPTSGFSLNLQNPTKTSYLSFSSSINTIFAPLSSNTTKSFSGLTHK). The tract at residues 100-105 (KGKAAL) is required for ssDNA binding. Positions 178–191 (KGRSDEGRVRKVLK) match the Nuclear localization signal motif. The disordered stretch occupies residues 253–274 (PEDASRSNNANPRSGAELEWNR).

The protein belongs to the Whirly family. In terms of assembly, homotetramer.

It is found in the nucleus. Its subcellular location is the plastid. The protein resides in the chloroplast. Single-stranded DNA-binding protein that acts as a transcriptional activator of the pathogenesis-related gene PR-10a. Upon elicitation, binds a 30bp promoter sequence known as elicitor element response (ERE) and is required for PR-10a expression. The protein is Single-stranded DNA-binding protein WHY1, chloroplastic (WHY1) of Solanum tuberosum (Potato).